The primary structure comprises 205 residues: Holliday junction branch migration complex subunit RuvA (205 aa).

The interval 1 to 64 (MIAHLRGELV…EDALTLYGFL (64 aa)) is domain I. The tract at residues 65–143 (TQAEYDLFEL…AVPAGGGGVP (79 aa)) is domain II. The flexible linker stretch occupies residues 144-153 (DGLPVAVAPA). Residues 153–205 (AGDAWAEASEALIALGYSRGEAAAALARVRAEAGEAPSVETLVRLALKQLYRG) form a domain III region.

The protein belongs to the RuvA family. Homotetramer. Forms an RuvA(8)-RuvB(12)-Holliday junction (HJ) complex. HJ DNA is sandwiched between 2 RuvA tetramers; dsDNA enters through RuvA and exits via RuvB. An RuvB hexamer assembles on each DNA strand where it exits the tetramer. Each RuvB hexamer is contacted by two RuvA subunits (via domain III) on 2 adjacent RuvB subunits; this complex drives branch migration. In the full resolvosome a probable DNA-RuvA(4)-RuvB(12)-RuvC(2) complex forms which resolves the HJ.

The protein localises to the cytoplasm. In terms of biological role, the RuvA-RuvB-RuvC complex processes Holliday junction (HJ) DNA during genetic recombination and DNA repair, while the RuvA-RuvB complex plays an important role in the rescue of blocked DNA replication forks via replication fork reversal (RFR). RuvA specifically binds to HJ cruciform DNA, conferring on it an open structure. The RuvB hexamer acts as an ATP-dependent pump, pulling dsDNA into and through the RuvAB complex. HJ branch migration allows RuvC to scan DNA until it finds its consensus sequence, where it cleaves and resolves the cruciform DNA. The chain is Holliday junction branch migration complex subunit RuvA from Symbiobacterium thermophilum (strain DSM 24528 / JCM 14929 / IAM 14863 / T).